Here is a 326-residue protein sequence, read N- to C-terminus: D-alanine--D-alanine ligase (326 aa).

The ATP-grasp domain maps to 114–313; sequence KRVWLQHGLR…YAELCVSIVS (200 aa). Residue 140–195 coordinates ATP; it reads PDRLGLPLILKPPHEGSTVGITKVAGYSDMKEGYAQAAKFDDEVLAEQFIAGRELT. Mg(2+)-binding residues include aspartate 267, glutamate 280, and asparagine 282.

The protein belongs to the D-alanine--D-alanine ligase family. The cofactor is Mg(2+). Mn(2+) serves as cofactor.

It is found in the cytoplasm. The catalysed reaction is 2 D-alanine + ATP = D-alanyl-D-alanine + ADP + phosphate + H(+). Its pathway is cell wall biogenesis; peptidoglycan biosynthesis. Functionally, cell wall formation. This chain is D-alanine--D-alanine ligase, found in Bordetella petrii (strain ATCC BAA-461 / DSM 12804 / CCUG 43448).